The primary structure comprises 75 residues: Large ribosomal subunit protein bL31 (75 aa).

It belongs to the bacterial ribosomal protein bL31 family. Type A subfamily. As to quaternary structure, part of the 50S ribosomal subunit.

Functionally, binds the 23S rRNA. The polypeptide is Large ribosomal subunit protein bL31 (Rhodopseudomonas palustris (strain BisB18)).